A 347-amino-acid polypeptide reads, in one-letter code: GMP reductase (347 aa).

108–131 contributes to the NADP(+) binding site; sequence ADFDKMKQILALSPSLKFICIDVA. 2 residues coordinate K(+): Gly181 and Gly183. The Thioimidate intermediate role is filled by Cys186. 216-239 contributes to the NADP(+) binding site; the sequence is IVSDGGCSVPGDVAKAFGGGADFV.

It belongs to the IMPDH/GMPR family. GuaC type 1 subfamily. As to quaternary structure, homotetramer.

The catalysed reaction is IMP + NH4(+) + NADP(+) = GMP + NADPH + 2 H(+). Its function is as follows. Catalyzes the irreversible NADPH-dependent deamination of GMP to IMP. It functions in the conversion of nucleobase, nucleoside and nucleotide derivatives of G to A nucleotides, and in maintaining the intracellular balance of A and G nucleotides. The sequence is that of GMP reductase from Yersinia pestis bv. Antiqua (strain Antiqua).